The primary structure comprises 486 residues: Cardiolipin synthase A (486 aa).

A run of 2 helical transmembrane segments spans residues 3–23 (IFYD…IANI) and 38–58 (MSWL…WFFF). PLD phosphodiesterase domains are found at residues 219 to 246 (LDVR…VDPY) and 399 to 426 (KKGL…DMRS). Residues histidine 224, lysine 226, aspartate 231, histidine 404, lysine 406, and aspartate 411 contribute to the active site.

The protein belongs to the phospholipase D family. Cardiolipin synthase subfamily. ClsA sub-subfamily.

The protein resides in the cell inner membrane. It catalyses the reaction 2 a 1,2-diacyl-sn-glycero-3-phospho-(1'-sn-glycerol) = a cardiolipin + glycerol. Its function is as follows. Catalyzes the reversible phosphatidyl group transfer from one phosphatidylglycerol molecule to another to form cardiolipin (CL) (diphosphatidylglycerol) and glycerol. The chain is Cardiolipin synthase A from Buchnera aphidicola subsp. Schizaphis graminum (strain Sg).